The primary structure comprises 133 residues: Small ribosomal subunit protein uS8 (133 aa).

Belongs to the universal ribosomal protein uS8 family. Part of the 30S ribosomal subunit. Contacts proteins S5 and S12.

Functionally, one of the primary rRNA binding proteins, it binds directly to 16S rRNA central domain where it helps coordinate assembly of the platform of the 30S subunit. This is Small ribosomal subunit protein uS8 from Leptospira interrogans serogroup Icterohaemorrhagiae serovar copenhageni (strain Fiocruz L1-130).